The following is a 156-amino-acid chain: ATP synthase subunit b (156 aa).

A helical transmembrane segment spans residues Leu7–Ile29.

Belongs to the ATPase B chain family. As to quaternary structure, F-type ATPases have 2 components, F(1) - the catalytic core - and F(0) - the membrane proton channel. F(1) has five subunits: alpha(3), beta(3), gamma(1), delta(1), epsilon(1). F(0) has three main subunits: a(1), b(2) and c(10-14). The alpha and beta chains form an alternating ring which encloses part of the gamma chain. F(1) is attached to F(0) by a central stalk formed by the gamma and epsilon chains, while a peripheral stalk is formed by the delta and b chains.

It is found in the cell inner membrane. F(1)F(0) ATP synthase produces ATP from ADP in the presence of a proton or sodium gradient. F-type ATPases consist of two structural domains, F(1) containing the extramembraneous catalytic core and F(0) containing the membrane proton channel, linked together by a central stalk and a peripheral stalk. During catalysis, ATP synthesis in the catalytic domain of F(1) is coupled via a rotary mechanism of the central stalk subunits to proton translocation. Its function is as follows. Component of the F(0) channel, it forms part of the peripheral stalk, linking F(1) to F(0). The protein is ATP synthase subunit b of Vibrio cholerae serotype O1 (strain ATCC 39541 / Classical Ogawa 395 / O395).